Here is a 242-residue protein sequence, read N- to C-terminus: N-glycosylase/DNA lyase (242 aa).

Residues Q26, S53, and W64 each coordinate 8-oxoguanine. Residues 120–184 (EGYYKNMKML…EDLRIKSVTS (65 aa)) form a helix-hairpin-helix region. K144 acts as the Schiff-base intermediate with DNA in catalysis. 8-oxoguanine-binding residues include F148 and P174. D176 is an active-site residue. Residues D210 and W214 each coordinate 8-oxoguanine.

This sequence belongs to the archaeal N-glycosylase/DNA lyase (AGOG) family.

The enzyme catalyses 2'-deoxyribonucleotide-(2'-deoxyribose 5'-phosphate)-2'-deoxyribonucleotide-DNA = a 3'-end 2'-deoxyribonucleotide-(2,3-dehydro-2,3-deoxyribose 5'-phosphate)-DNA + a 5'-end 5'-phospho-2'-deoxyribonucleoside-DNA + H(+). In terms of biological role, DNA repair enzyme that is part of the base excision repair (BER) pathway; protects from oxidative damage by removing the major product of DNA oxidation, 8-oxoguanine (GO), from single- and double-stranded DNA substrates. The polypeptide is N-glycosylase/DNA lyase (Pyrococcus furiosus (strain ATCC 43587 / DSM 3638 / JCM 8422 / Vc1)).